A 223-amino-acid polypeptide reads, in one-letter code: Translation initiation factor 6 (223 aa).

Belongs to the eIF-6 family.

Functionally, binds to the 50S ribosomal subunit and prevents its association with the 30S ribosomal subunit to form the 70S initiation complex. This Sulfolobus acidocaldarius (strain ATCC 33909 / DSM 639 / JCM 8929 / NBRC 15157 / NCIMB 11770) protein is Translation initiation factor 6.